A 114-amino-acid polypeptide reads, in one-letter code: Aspartate 1-decarboxylase (114 aa).

Catalysis depends on S25, which acts as the Schiff-base intermediate with substrate; via pyruvic acid. S25 bears the Pyruvic acid (Ser) mark. T57 lines the substrate pocket. The Proton donor role is filled by Y58. 71–73 (GAA) contacts substrate.

This sequence belongs to the PanD family. Heterooctamer of four alpha and four beta subunits. The cofactor is pyruvate. In terms of processing, is synthesized initially as an inactive proenzyme, which is activated by self-cleavage at a specific serine bond to produce a beta-subunit with a hydroxyl group at its C-terminus and an alpha-subunit with a pyruvoyl group at its N-terminus.

Its subcellular location is the cytoplasm. It catalyses the reaction L-aspartate + H(+) = beta-alanine + CO2. It participates in cofactor biosynthesis; (R)-pantothenate biosynthesis; beta-alanine from L-aspartate: step 1/1. Functionally, catalyzes the pyruvoyl-dependent decarboxylation of aspartate to produce beta-alanine. In Campylobacter hominis (strain ATCC BAA-381 / DSM 21671 / CCUG 45161 / LMG 19568 / NCTC 13146 / CH001A), this protein is Aspartate 1-decarboxylase.